Here is a 547-residue protein sequence, read N- to C-terminus: CTP synthase (547 aa).

The segment at 1–265 (MARFIFITGG…DQAVLDAFQI (265 aa)) is amidoligase domain. Residue Ser-13 coordinates CTP. Ser-13 serves as a coordination point for UTP. Residues 14 to 19 (SLGKGL) and Asp-71 each bind ATP. Mg(2+)-binding residues include Asp-71 and Glu-139. Residues 146 to 148 (DIE), 186 to 191 (KTKPTQ), and Lys-222 each bind CTP. UTP is bound by residues 186–191 (KTKPTQ) and Lys-222. In terms of domain architecture, Glutamine amidotransferase type-1 spans 291 to 546 (KIAIVGKYVQ…VRAAKESSRL (256 aa)). Gly-353 provides a ligand contact to L-glutamine. Cys-380 functions as the Nucleophile; for glutamine hydrolysis in the catalytic mechanism. L-glutamine is bound by residues 381–384 (LGMQ), Glu-404, and Arg-474. Residues His-519 and Glu-521 contribute to the active site.

This sequence belongs to the CTP synthase family. In terms of assembly, homotetramer.

It catalyses the reaction UTP + L-glutamine + ATP + H2O = CTP + L-glutamate + ADP + phosphate + 2 H(+). The catalysed reaction is L-glutamine + H2O = L-glutamate + NH4(+). It carries out the reaction UTP + NH4(+) + ATP = CTP + ADP + phosphate + 2 H(+). Its pathway is pyrimidine metabolism; CTP biosynthesis via de novo pathway; CTP from UDP: step 2/2. With respect to regulation, allosterically activated by GTP, when glutamine is the substrate; GTP has no effect on the reaction when ammonia is the substrate. The allosteric effector GTP functions by stabilizing the protein conformation that binds the tetrahedral intermediate(s) formed during glutamine hydrolysis. Inhibited by the product CTP, via allosteric rather than competitive inhibition. Its function is as follows. Catalyzes the ATP-dependent amination of UTP to CTP with either L-glutamine or ammonia as the source of nitrogen. Regulates intracellular CTP levels through interactions with the four ribonucleotide triphosphates. The sequence is that of CTP synthase from Ruegeria pomeroyi (strain ATCC 700808 / DSM 15171 / DSS-3) (Silicibacter pomeroyi).